A 366-amino-acid chain; its full sequence is Probable glucuronokinase 2 (366 aa).

Residue proline 126 to alanine 136 participates in ATP binding. The active-site Proton acceptor is the aspartate 179.

Belongs to the GHMP kinase family. Mg(2+) serves as cofactor. It depends on Mn(2+) as a cofactor. Co(2+) is required as a cofactor.

It catalyses the reaction D-glucuronate + ATP = 1-phospho-alpha-D-glucuronate + ADP + H(+). Its function is as follows. Sugar-1-kinase with a strict substrate specificity for D-glucuronic acid and ATP. Involved in the biosynthesis of UDP-glucuronic acid (UDP-GlcA), providing nucleotide sugars for cell-wall polymers. May be also involved in a salvage pathway for glucuronic acid. In Arabidopsis thaliana (Mouse-ear cress), this protein is Probable glucuronokinase 2 (GLCAK2).